Reading from the N-terminus, the 691-residue chain is MLCVLAGAAYGVFRTEAALSSQWRAEAVSGVPLTVEVTDMPRSDGRRVQFAAKAVDSGGRTFDLLLSDYKRREWAVGSRWRITARVHPVVGELNLRGLNREAWALSNGVGGVGTVGADRVLLHGGSGWGIAVWRSRISRNWRQADADGGLSDGIGLMRALSVGEQSALRPGLWQAFRPLGLTHLVSISGLHVTMVAVLFAWLAKRLLACSPRLPARPRAWVLAAGCAGALFYALLAGFSVPTQRSVLMLAAFAWAWRRGRLSAWATWWQALAAVLLFDPLAVLGVGTWLSFGLVAALIWACAGRLYEGKRQTAVRGQWAASVLSLVLLGYLFASLPLVSPLVNAVSIPWFSWVLTPLALLGSVVPFAPLQQAGAFLAEYTLRFLVWLADVSPEFAVAAAPLPLLVLAVCAALLLLLPRGLGLRPWAVLLLAGFVSYRPEAVPENEAAVTVWDAGQGLSVLVRTANRHLLFDTGTVAAAQTGIVPSLNAAGVRRLDKLVLSHHDSDHDGGFQAVGKIPNGGIYAGQPEFYEGARHCAEQRWQWDGVDFEFLRPSERKNIDDNGKSCVLRVVAGGAALLVTGDLDTKGEESLVGKYGGNLYSQVLVLGHHGSNTSSSGVFLNAVSPEYAVASSGYANAYKHPTEAVQNRVRAHGIKLLRTDLSGALQFGLGRGGVKAQRLRVYKFYWQKKPFE.

Transmembrane regions (helical) follow at residues 183-203 (HLVS…AWLA), 220-240 (WVLA…GFSV), 280-300 (LAVL…LIWA), 322-342 (VLSL…SPLV), 347-367 (IPWF…VPFA), and 396-416 (VAAA…LLLL).

It to B.subtilis ComEC, H.influenzae REC2, and E.coli YcaI.

It localises to the cell inner membrane. Its function is as follows. Essential for natural transformation. Could be a transporter involved in DNA uptake. The sequence is that of Competence protein ComA (comA) from Neisseria gonorrhoeae.